The following is a 95-amino-acid chain: Cytochrome b-c1 complex subunit 8, mitochondrial (95 aa).

Residues 57–74 (FLYVAIPFVVVWSIWTRA) traverse the membrane as a helical segment.

This sequence belongs to the UQCRQ/QCR8 family. As to quaternary structure, component of the ubiquinol-cytochrome c oxidoreductase (cytochrome b-c1 complex, complex III, CIII), a multisubunit enzyme composed of 10 subunits. The complex is composed of 3 respiratory subunits cytochrome b (COB), cytochrome c1 (CYT1) and Rieske protein (RIP1), 2 core protein subunits COR1 and QCR2, and 5 low-molecular weight protein subunits QCR6, QCR7, QCR8, QCR9 and QCR10. The complex exists as an obligatory dimer and forms supercomplexes (SCs) in the inner mitochondrial membrane with a monomer or a dimer of cytochrome c oxidase (complex IV, CIV), resulting in 2 different assemblies (supercomplexes III(2)IV and III(2)IV(2)).

It is found in the membrane. Its subcellular location is the mitochondrion inner membrane. In terms of biological role, component of the ubiquinol-cytochrome c oxidoreductase, a multisubunit transmembrane complex that is part of the mitochondrial electron transport chain which drives oxidative phosphorylation. The complex plays an important role in the uptake of multiple carbon sources present in different host niches. The polypeptide is Cytochrome b-c1 complex subunit 8, mitochondrial (Candida albicans (strain SC5314 / ATCC MYA-2876) (Yeast)).